A 695-amino-acid polypeptide reads, in one-letter code: Probable rhamnogalacturonate lyase C (695 aa).

Positions 1–21 are cleaved as a signal peptide; the sequence is MFLPSRKALAFLACLASHSVA. N-linked (GlcNAc...) asparagine glycosylation is found at asparagine 28, asparagine 96, asparagine 118, asparagine 144, asparagine 199, asparagine 285, asparagine 532, and asparagine 638.

Belongs to the polysaccharide lyase 4 family.

The protein resides in the secreted. It catalyses the reaction Endotype eliminative cleavage of L-alpha-rhamnopyranosyl-(1-&gt;4)-alpha-D-galactopyranosyluronic acid bonds of rhamnogalacturonan I domains in ramified hairy regions of pectin leaving L-rhamnopyranose at the reducing end and 4-deoxy-4,5-unsaturated D-galactopyranosyluronic acid at the non-reducing end.. Functionally, pectinolytic enzymes consist of four classes of enzymes: pectin lyase, polygalacturonase, pectin methylesterase and rhamnogalacturonase. Degrades the rhamnogalacturonan I (RG-I) backbone of pectin. The sequence is that of Probable rhamnogalacturonate lyase C (rglC) from Aspergillus oryzae (strain ATCC 42149 / RIB 40) (Yellow koji mold).